A 51-amino-acid chain; its full sequence is UPF0391 membrane protein PsycPRwf_2202 (51 aa).

A run of 2 helical transmembrane segments spans residues 6–26 and 27–47; these read IIFA…VAGL and SQNF…IGFI.

Belongs to the UPF0391 family.

The protein resides in the cell membrane. The sequence is that of UPF0391 membrane protein PsycPRwf_2202 from Psychrobacter sp. (strain PRwf-1).